Reading from the N-terminus, the 358-residue chain is Pre-mRNA-splicing factor spp2 (358 aa).

Disordered regions lie at residues 1–250 (MTDQ…RAVP) and 298–358 (AWNQ…RGDR). The segment covering 24 to 40 (KTKKPSRPTHTRRHHAR) has biased composition (basic residues). Composition is skewed to basic and acidic residues over residues 80-137 (LENR…DASR) and 145-160 (RSRD…KDLQ). Residues 174-185 (NPKSTTTATSSF) show a composition bias toward polar residues. Basic and acidic residues-rich tracts occupy residues 233-246 (SSHD…HSDY) and 309-358 (GDSR…RGDR).

This sequence belongs to the SPP2 family. As to quaternary structure, associated with the spliceosome.

It is found in the nucleus. In terms of biological role, involved in spliceosome maturation and the first step of pre-mRNA splicing. The sequence is that of Pre-mRNA-splicing factor spp2 (msp-40) from Neurospora crassa (strain ATCC 24698 / 74-OR23-1A / CBS 708.71 / DSM 1257 / FGSC 987).